The chain runs to 344 residues: tRNA(Ile)-lysidine synthase (344 aa).

43 to 48 (SGGADS) is an ATP binding site.

The protein belongs to the tRNA(Ile)-lysidine synthase family.

It localises to the cytoplasm. It catalyses the reaction cytidine(34) in tRNA(Ile2) + L-lysine + ATP = lysidine(34) in tRNA(Ile2) + AMP + diphosphate + H(+). Ligates lysine onto the cytidine present at position 34 of the AUA codon-specific tRNA(Ile) that contains the anticodon CAU, in an ATP-dependent manner. Cytidine is converted to lysidine, thus changing the amino acid specificity of the tRNA from methionine to isoleucine. The polypeptide is tRNA(Ile)-lysidine synthase (Bordetella parapertussis (strain 12822 / ATCC BAA-587 / NCTC 13253)).